A 120-amino-acid chain; its full sequence is Small cysteine and glycine repeat-containing protein 2 (120 aa).

The 19 X 2 AA repeats of CG stretch occupies residues 4–104; it reads CGCGGCGGCG…TCHSCGCGCG (101 aa).

This sequence belongs to the KRTAP type 28 family.

In the hair cortex, hair keratin intermediate filaments are embedded in an interfilamentous matrix, consisting of hair keratin-associated proteins (KRTAP), which are essential for the formation of a rigid and resistant hair shaft through their extensive disulfide bond cross-linking with abundant cysteine residues of hair keratins. The matrix proteins include the high-sulfur and high-glycine-tyrosine keratins. The protein is Small cysteine and glycine repeat-containing protein 2 of Homo sapiens (Human).